Here is a 431-residue protein sequence, read N- to C-terminus: Intraflagellar transport protein 38 (431 aa).

Residues 177–218 (SAAVQQRIKNLAAECNTLQEEVTTNKREKAKLEEQITQKKQS) are a coiled coil. The segment at 346 to 431 (INTNAEIPDD…EELDPDNIEF (86 aa)) is disordered. Positions 352–370 (IPDDESYSYSYEEEEEEEQ) are enriched in acidic residues. A compositionally biased stretch (basic and acidic residues) spans 384–405 (PETHSNGEKHRGLDELSHKSNE). Over residues 420-431 (GGEELDPDNIEF) the composition is skewed to acidic residues.

The protein belongs to the CLUAP1 family.

It is found in the cell projection. The protein resides in the cilium. It localises to the flagellum. Its subcellular location is the cytoplasm. The protein localises to the cytoskeleton. It is found in the flagellum axoneme. The protein resides in the flagellum basal body. Component of the intraflagellar transport complex B (IFT-B) involved in flagellar assembly. The chain is Intraflagellar transport protein 38 from Giardia intestinalis (strain ATCC 50803 / WB clone C6) (Giardia lamblia).